Here is a 124-residue protein sequence, read N- to C-terminus: Large ribosomal subunit protein bL12 (124 aa).

This sequence belongs to the bacterial ribosomal protein bL12 family. Homodimer. Part of the ribosomal stalk of the 50S ribosomal subunit. Forms a multimeric L10(L12)X complex, where L10 forms an elongated spine to which 2 to 4 L12 dimers bind in a sequential fashion. Binds GTP-bound translation factors.

Functionally, forms part of the ribosomal stalk which helps the ribosome interact with GTP-bound translation factors. Is thus essential for accurate translation. In Brucella abortus (strain S19), this protein is Large ribosomal subunit protein bL12.